The following is a 276-amino-acid chain: MAIKKYKPTSNGRRGMTVLDFSEITTDQPEKSLLAPLKKKAGRNNQGKITVRHQGGGHKRQYRIIDFKRDKDGIPGRVATIEYDPNRSANIALINYADGEKRYIIAPKNLKVGMEIMSGPDADIKIGNALPLENIPVGTLVHNIELKPGRGGQLVRAAGTSAQVLGKEGKYVIVRLASGEVRMILGKCRATVGEVGNEQHELVNIGKAGRARWLGIRPTVRGSVMNPVDHPHGGGEGKAPIGRKSPMTPWGKPTLGYKTRKKKNKSDKFIIRRRKK.

Residues 224-276 (VMNPVDHPHGGGEGKAPIGRKSPMTPWGKPTLGYKTRKKKNKSDKFIIRRRKK) are disordered. Residues 258–276 (KTRKKKNKSDKFIIRRRKK) show a composition bias toward basic residues.

This sequence belongs to the universal ribosomal protein uL2 family. Part of the 50S ribosomal subunit. Forms a bridge to the 30S subunit in the 70S ribosome.

Functionally, one of the primary rRNA binding proteins. Required for association of the 30S and 50S subunits to form the 70S ribosome, for tRNA binding and peptide bond formation. It has been suggested to have peptidyltransferase activity; this is somewhat controversial. Makes several contacts with the 16S rRNA in the 70S ribosome. The sequence is that of Large ribosomal subunit protein uL2 from Geobacillus kaustophilus (strain HTA426).